We begin with the raw amino-acid sequence, 179 residues long: Apoptosis regulator Bcl-2 homolog (179 aa).

A BH1 motif is present at residues 76 to 95; sequence ELFKDLINWGRICGFIVFSA. A BH2 motif is present at residues 126–141; that stretch reads PWMISHGGQEEFLAFS.

This sequence belongs to the Bcl-2 family. Interacts with host BECN1 (via BH3 homology domain); this interaction allows the virus to inhibit BECN1, and thus autophagy. Interacts with host BID. Interacts with host BAX.

It localises to the host mitochondrion. The protein resides in the host endoplasmic reticulum. In terms of biological role, suppresses apoptosis in host cell to promote the viral replication. Has the ability to potentially bind to all the members of the proapoptotic Bcl-2 family. Inhibits autophagy by interacting with host Beclin 1 (BECN1). The chain is Apoptosis regulator Bcl-2 homolog from African swine fever virus (isolate Pig/Kenya/KEN-50/1950) (ASFV).